Consider the following 474-residue polypeptide: tRNA-2-methylthio-N(6)-dimethylallyladenosine synthase (474 aa).

In terms of domain architecture, MTTase N-terminal spans 21-138; it reads ERVYVETQGC…LPQMLARRRS (118 aa). [4Fe-4S] cluster contacts are provided by Cys-30, Cys-67, Cys-101, Cys-175, Cys-179, and Cys-182. In terms of domain architecture, Radical SAM core spans 161-395; sequence RAEGPTAYVS…ARLHEQQSAA (235 aa). The 64-residue stretch at 397–460 folds into the TRAM domain; sequence RALLGTRQSV…THSLRGRVVS (64 aa).

It belongs to the methylthiotransferase family. MiaB subfamily. As to quaternary structure, monomer. [4Fe-4S] cluster is required as a cofactor.

The protein localises to the cytoplasm. The enzyme catalyses N(6)-dimethylallyladenosine(37) in tRNA + (sulfur carrier)-SH + AH2 + 2 S-adenosyl-L-methionine = 2-methylsulfanyl-N(6)-dimethylallyladenosine(37) in tRNA + (sulfur carrier)-H + 5'-deoxyadenosine + L-methionine + A + S-adenosyl-L-homocysteine + 2 H(+). Its function is as follows. Catalyzes the methylthiolation of N6-(dimethylallyl)adenosine (i(6)A), leading to the formation of 2-methylthio-N6-(dimethylallyl)adenosine (ms(2)i(6)A) at position 37 in tRNAs that read codons beginning with uridine. In Halorhodospira halophila (strain DSM 244 / SL1) (Ectothiorhodospira halophila (strain DSM 244 / SL1)), this protein is tRNA-2-methylthio-N(6)-dimethylallyladenosine synthase.